Consider the following 470-residue polypeptide: Protein escargot (470 aa).

The disordered stretch occupies residues Leu271 to Tyr309. 4 C2H2-type zinc fingers span residues Tyr309–His331, Phe344–His366, Cys370–His392, and Phe398–His420. The C2H2-type 5; atypical zinc-finger motif lies at Tyr426 to Cys449. The interval Gly448–Pro470 is disordered.

Belongs to the snail C2H2-type zinc-finger protein family. Expression is complex and dynamic. In early embryogenesis, expression begins on the dorsal side of the embryo. Expressed in a pattern of longitudinal stripes early in germband elongation. Later in embryogenesis, expression is in cells that correspond to the wing, haltere, leg and genital imaginal disks and the abdominal histoblasts. In the embryonic leg disk, expression is restricted to imaginal cells. Also expressed in the central nervous system (CNS), tracheae and head of stage 14 embryos. CNS and tracheal expression decays during later stages, though head expression persists until late in embryogenesis. In third instar larvae, expression is seen in the brain and in regions of many imaginal tissues including the eye-antennal, wing, leg and haltere disks. Expressed in embryonic, larval and adult male germline stem cells and in the somatic cells of the embryonic gonads.

The protein localises to the nucleus. Functionally, transcription factor that can both stimulate and repress transcription. Binds to the consensus DNA sequence 5'-A/GCAGGTG-3'. Regulates cell motility and adhesion during tracheal morphogenesis by stimulating transcription of the DE-cadherin gene shg at branch tips, thereby promoting tracheal tube fusion. Maintains diploidy in imaginal cells by inhibiting the transcription of genes required for endoreplication. Required for development of the genital disk and acts as an intrinsic determinant of wing cell fate. The somatic protein is required for maintenance of male germ cells. Acts with other members of the snail protein family to control embryonic central nervous system development. The polypeptide is Protein escargot (esg) (Drosophila melanogaster (Fruit fly)).